Reading from the N-terminus, the 1116-residue chain is MDPFTEKLLERTRARRENLQKKMADRPTAGTRTAALNKRPREPLLEANHQPPAPAEEAKPSSKPSPSKRRCSDNASTPDAGAENKQPKTPELPKTELSAVASHQQLRATNQTPQVSLLSSDKELTASDVKDASSVKTRMQKLADQRRYWDNNVSPSSSPPAHVPPKDIIVSPPKPQIPDVGNDTPVGRRGRFANLAATIGSWEDDLSHPFVKPNNKQEKPGTACLSKESTTSSASASMNSHSVKQDTTSCSQRPKDTTVNKAVCSGQLKNILPASKPASSVASTEVSGKSKPLAIKSPAVVTSKPNENVLPASSSLKPVSANSSPQKTERPASRIYSYQSASARNELNNNTPVQTQQKDKVATSGGVGIKSFLERFGEKCQEHSPAPLNQGHRTAVLTPNTKSIQERLLKQNDISSTASLAQQQKKEREKELAALRGRYDRRNVWTKQEDEQQGTFPETSSNLPTSDVASCSETKRAEASGITSEKSVSGHFHPNMAEQVSSPEKIPTPVQSQLPLESPRLVNEGNTGNVACEVEMSVDGSIEEINSSGIITNIFSDVLEQHDEEGEEVDECLVEQVETDTDDEEREDEEEDALNISSMSLLAPLAETVGIESPKALLSPSNKVAAGNGESCDRKRSGRFQKSHVLRAESNDGIGSSEENQNLLYSIDAYRSQRFKETDRPPIMQTIVRKEDVSSRLQDKKTASPLSVNIKQKMKTLSNEVNLQQTVIHQASQALNCCIDEDHGKGSETEAEAERLLIVATEKRAALIAELNKIKNEGPQSQKKNVSNESAPSRGCISVSEMFLPLKADFVCNATQRMDSANYYFFLMIRAGAENIVASPLTSITSTMKGDALAFPTTFSLEDVSNDFEICVEVYSLVQKKEGHAPDKKKKTMKSKAITPKRLLTSITKSNMHTPALASPGGPNAVRTSNFVLVGSHKLTLSSIGSNKFPLDKVPFLSPLEGHIYLKIKCHVNSSVEDKGFLTMFEDVSGFGAWHRRWCVLSGYCISYWTYPDDEKRKKPIGRINLANCTSRKIEPANREFCARPNTFELITVRPQREGDRETLVSQCRDTLCVTKNWLSADTKEERNLWMQKLNQFLVDLRMWQPNACYRPASKP.

2 stretches are compositionally biased toward basic and acidic residues: residues 1 to 25 and 85 to 94; these read MDPF…KMAD and KQPKTPELPK. Disordered regions lie at residues 1 to 188, 205 to 257, 304 to 363, and 443 to 522; these read MDPF…PVGR, DLSH…PKDT, KPNE…KVAT, and NVWT…PRLV. Residues 101 to 119 show a composition bias toward polar residues; that stretch reads ASHQQLRATNQTPQVSLLS. The segment covering 120-133 has biased composition (basic and acidic residues); the sequence is SDKELTASDVKDAS. The interval 142–254 is interactions with myh9 and myh10; sequence LADQRRYWDN…QDTTSCSQRP (113 aa). Low complexity predominate over residues 226–242; that stretch reads SKESTTSSASASMNSHS. Positions 255–418 are interaction with F-actin; it reads KDTTVNKAVC…LKQNDISSTA (164 aa). 2 stretches are compositionally biased toward polar residues: residues 304 to 326 and 336 to 356; these read KPNE…SSPQ and YSYQ…VQTQ. A coiled-coil region spans residues 416-443; it reads STASLAQQQKKEREKELAALRGRYDRRN. The span at 453-472 shows a compositional bias: polar residues; sequence QGTFPETSSNLPTSDVASCS. Residues 975–1099 enclose the PH domain; the sequence is SVEDKGFLTM…WMQKLNQFLV (125 aa).

In terms of assembly, interacts with and bundles F-actin. Interacts with the non-muscle myosin II heavy chains myh9 and myh10, and these interactions may be enhanced by the phosphorylation of myosin II regulatory light chain by mylk.

The protein resides in the nucleus. It is found in the cytoplasm. The protein localises to the cytoskeleton. Its subcellular location is the cell cortex. It localises to the cell projection. The protein resides in the bleb. Functionally, required for cytokinesis. Essential for the structural integrity of the cleavage furrow and for completion of cleavage furrow ingression. Plays a role in bleb assembly during metaphase and anaphase of mitosis. May play a significant role in podocyte cell migration. This chain is Anillin (anln), found in Xenopus laevis (African clawed frog).